A 473-amino-acid chain; its full sequence is Ribosomal RNA small subunit methyltransferase F (473 aa).

S-adenosyl-L-methionine is bound by residues 123-129 (AAAPGSK), Glu147, Asp174, and Asp192. Cys245 serves as the catalytic Nucleophile.

This sequence belongs to the class I-like SAM-binding methyltransferase superfamily. RsmB/NOP family.

Its subcellular location is the cytoplasm. The catalysed reaction is cytidine(1407) in 16S rRNA + S-adenosyl-L-methionine = 5-methylcytidine(1407) in 16S rRNA + S-adenosyl-L-homocysteine + H(+). Specifically methylates the cytosine at position 1407 (m5C1407) of 16S rRNA. This Vibrio cholerae serotype O1 (strain ATCC 39315 / El Tor Inaba N16961) protein is Ribosomal RNA small subunit methyltransferase F.